We begin with the raw amino-acid sequence, 55 residues long: Large ribosomal subunit protein bL33 (55 aa).

The protein belongs to the bacterial ribosomal protein bL33 family.

This is Large ribosomal subunit protein bL33 from Xanthomonas oryzae pv. oryzae (strain PXO99A).